The chain runs to 569 residues: Urease subunit beta (569 aa).

Residues 131–569 (GGIDTHIHFI…VSLAQLFSIF (439 aa)) enclose the Urease domain. H136, H138, and K219 together coordinate Ni(2+). K219 carries the N6-carboxylysine modification. Residue H221 participates in substrate binding. H248 and H274 together coordinate Ni(2+). Catalysis depends on H322, which acts as the Proton donor. D362 contacts Ni(2+).

The protein belongs to the metallo-dependent hydrolases superfamily. Urease alpha subunit family. In terms of assembly, heterohexamer of 3 UreA (alpha) and 3 UreB (beta) subunits. The cofactor is Ni cation. Carboxylation allows a single lysine to coordinate two nickel ions.

The protein localises to the cytoplasm. The enzyme catalyses urea + 2 H2O + H(+) = hydrogencarbonate + 2 NH4(+). It participates in nitrogen metabolism; urea degradation; CO(2) and NH(3) from urea (urease route): step 1/1. This chain is Urease subunit beta, found in Helicobacter pylori (strain HPAG1).